The chain runs to 427 residues: uncharacterized protein (427 aa).

Helical transmembrane passes span 10-30, 43-63, and 71-91; these read LAYL…AGFW, KIIS…SKLA, and IFEI…SFIS. Thr199 is modified (phosphothreonine). Position 234 is a phosphoserine (Ser234). A run of 5 helical transmembrane segments spans residues 253 to 273, 288 to 308, 327 to 347, 358 to 378, and 397 to 417; these read NLNP…IGPL, FAEA…VVLG, LLIG…LPII, ILDD…PPAI, and ILFW…VSGA.

Belongs to the auxin efflux carrier (TC 2.A.69) family.

It is found in the membrane. This is an uncharacterized protein from Saccharomyces cerevisiae (strain ATCC 204508 / S288c) (Baker's yeast).